The chain runs to 341 residues: Malate dehydrogenase 2, mitochondrial (341 aa).

Residues 1 to 22 constitute a mitochondrion transit peptide; that stretch reads MFRSMIVRSASPVKQGLLRRGF. NAD(+) contacts are provided by residues 36–42 and aspartate 62; that span reads GAAGGIG. The substrate site is built by arginine 109 and arginine 115. Residues asparagine 122 and 145-147 contribute to the NAD(+) site; that span reads ISN. 2 residues coordinate substrate: asparagine 147 and arginine 181. Residue histidine 205 is the Proton acceptor of the active site. Methionine 256 serves as a coordination point for NAD(+).

This sequence belongs to the LDH/MDH superfamily. MDH type 1 family. As to quaternary structure, homodimer. In terms of tissue distribution, expressed in rosette leaves at low levels.

The protein resides in the mitochondrion matrix. It catalyses the reaction (S)-malate + NAD(+) = oxaloacetate + NADH + H(+). Its function is as follows. Catalyzes a reversible NAD-dependent dehydrogenase reaction involved in central metabolism and redox homeostasis between organelle compartments. Required for carbon dioxide and energy partitioning in leaves. May limit photorespiration during the dark phase. Can convert 2-ketoglutarate to L-2-hydroxyglutarate in vitro. In Arabidopsis thaliana (Mouse-ear cress), this protein is Malate dehydrogenase 2, mitochondrial.